We begin with the raw amino-acid sequence, 572 residues long: [Pyruvate dehydrogenase [acetyl-transferring]]-phosphatase 1, mitochondrial (572 aa).

The tract at residues 95–122 (NTSGNINMPSPNPKGTETQKSQRSQNDQ) is disordered. The PPM-type phosphatase domain occupies 153–543 (RYDVAQLPSN…DDLTVTVAFF (391 aa)). Mn(2+) is bound by residues aspartate 197, glycine 198, aspartate 424, and aspartate 480. Residues 470–480 (EAQRPAFRYKD) are compositionally biased toward basic and acidic residues. The interval 470-492 (EAQRPAFRYKDNNSSSPSGSNPE) is disordered. The span at 481–491 (NNSSSPSGSNP) shows a compositional bias: low complexity.

Belongs to the PP2C family. Mg(2+) serves as cofactor. The cofactor is Mn(2+). In terms of processing, processed by mitochondrial inner membrane protease (IMP) complex and released to the intermembrane space.

The protein localises to the mitochondrion intermembrane space. It catalyses the reaction O-phospho-L-seryl-[pyruvate dehydrogenase E1 alpha subunit] + H2O = L-seryl-[pyruvate dehydrogenase E1 alpha subunit] + phosphate. Catalyzes the dephosphorylation and concomitant reactivation of the E1 alpha subunit (PDA1) of the pyruvate dehydrogenase complex. This Saccharomyces cerevisiae (strain ATCC 204508 / S288c) (Baker's yeast) protein is [Pyruvate dehydrogenase [acetyl-transferring]]-phosphatase 1, mitochondrial (PTC5).